The sequence spans 146 residues: Hemoglobin subunit beta (146 aa).

The 145-residue stretch at 2-146 folds into the Globin domain; that stretch reads HWTAEEKQLI…VAHALARKYH (145 aa). Positions 63 and 92 each coordinate heme b.

Belongs to the globin family. In terms of assembly, heterotetramer of two alpha chains and two beta chains. Red blood cells.

In terms of biological role, involved in oxygen transport from the lung to the various peripheral tissues. The sequence is that of Hemoglobin subunit beta (HBB) from Anas platyrhynchos platyrhynchos (Northern mallard).